The following is a 347-amino-acid chain: Protein pelota homolog (347 aa).

Belongs to the eukaryotic release factor 1 family. Pelota subfamily. As to quaternary structure, monomer. A divalent metal cation serves as cofactor.

The protein resides in the cytoplasm. In terms of biological role, may function in recognizing stalled ribosomes, interact with stem-loop structures in stalled mRNA molecules, and effect endonucleolytic cleavage of the mRNA. May play a role in the release non-functional ribosomes and degradation of damaged mRNAs. Has endoribonuclease activity. The polypeptide is Protein pelota homolog (Methanococcoides burtonii (strain DSM 6242 / NBRC 107633 / OCM 468 / ACE-M)).